Here is a 254-residue protein sequence, read N- to C-terminus: Glucosamine-6-phosphate deaminase (254 aa).

Asp65 serves as the catalytic Proton acceptor; for enolization step. Asn134 serves as the catalytic For ring-opening step. His136 (proton acceptor; for ring-opening step) is an active-site residue. Catalysis depends on Glu141, which acts as the For ring-opening step.

The protein belongs to the glucosamine/galactosamine-6-phosphate isomerase family. NagB subfamily.

It catalyses the reaction alpha-D-glucosamine 6-phosphate + H2O = beta-D-fructose 6-phosphate + NH4(+). The protein operates within amino-sugar metabolism; N-acetylneuraminate degradation; D-fructose 6-phosphate from N-acetylneuraminate: step 5/5. Functionally, catalyzes the reversible isomerization-deamination of glucosamine 6-phosphate (GlcN6P) to form fructose 6-phosphate (Fru6P) and ammonium ion. This Corynebacterium aurimucosum (strain ATCC 700975 / DSM 44827 / CIP 107346 / CN-1) (Corynebacterium nigricans) protein is Glucosamine-6-phosphate deaminase.